We begin with the raw amino-acid sequence, 529 residues long: Type I restriction enzyme EcoKI methylase subunit (529 aa).

S-adenosyl-L-methionine-binding positions include 148–153 (QYFTPR), 178–180 (TAG), and glutamate 216.

This sequence belongs to the N(4)/N(6)-methyltransferase family. The type I restriction/modification system is composed of three polypeptides R, M and S. The restriction enzyme has stoichiometry R(2)M(2)S(1). The methyltransferase is composed of M(2)S(1). As to quaternary structure, (Microbial infection) Interacts with Escherichia phage T7 protein Ocr; this interaction leads to the inhibition of the methyltransferase restriction enzyme M.EcoKI composed of M(2)S(1).

The enzyme catalyses a 2'-deoxyadenosine in DNA + S-adenosyl-L-methionine = an N(6)-methyl-2'-deoxyadenosine in DNA + S-adenosyl-L-homocysteine + H(+). The subtype gamma methyltransferase (M) subunit of a type I restriction enzyme. The M and S subunits together form a methyltransferase (MTase) that methylates A-2 on the top and A-3 on the bottom strand of the sequence 5'-AACN(6)GTGC-3'. In the presence of the R subunit the complex can also act as an endonuclease, binding to the same target sequence but cutting the DNA some distance from this site. Whether the DNA is cut or modified depends on the methylation state of the target sequence. When the target site is unmodified, the DNA is cut. When the target site is hemimethylated, the complex acts as a maintenance MTase modifying the DNA so that both strands become methylated. After locating a non-methylated recognition site, the enzyme complex serves as a molecular motor that translocates DNA in an ATP-dependent manner until a collision occurs that triggers cleavage. The protein is Type I restriction enzyme EcoKI methylase subunit of Escherichia coli (strain K12).